Here is a 378-residue protein sequence, read N- to C-terminus: Succinyl-diaminopimelate desuccinylase (378 aa).

His67 serves as a coordination point for Zn(2+). Asp69 is a catalytic residue. Asp100 contacts Zn(2+). The active-site Proton acceptor is the Glu134. Residues Glu135, Glu163, and His349 each coordinate Zn(2+).

Belongs to the peptidase M20A family. DapE subfamily. As to quaternary structure, homodimer. Zn(2+) serves as cofactor. It depends on Co(2+) as a cofactor.

It carries out the reaction N-succinyl-(2S,6S)-2,6-diaminopimelate + H2O = (2S,6S)-2,6-diaminopimelate + succinate. Its pathway is amino-acid biosynthesis; L-lysine biosynthesis via DAP pathway; LL-2,6-diaminopimelate from (S)-tetrahydrodipicolinate (succinylase route): step 3/3. In terms of biological role, catalyzes the hydrolysis of N-succinyl-L,L-diaminopimelic acid (SDAP), forming succinate and LL-2,6-diaminopimelate (DAP), an intermediate involved in the bacterial biosynthesis of lysine and meso-diaminopimelic acid, an essential component of bacterial cell walls. In Pasteurella multocida (strain Pm70), this protein is Succinyl-diaminopimelate desuccinylase.